The following is a 719-amino-acid chain: BRCA1-A complex subunit RAP80 (719 aa).

The disordered stretch occupies residues 1-30 (MPRRKKKVKEVSESRNLEKKDVETTSSVSV). The segment at 1–101 (MPRRKKKVKE…SEQEAREVNS (101 aa)) is necessary for transcriptional repression. Residues 9–23 (KEVSESRNLEKKDVE) are compositionally biased toward basic and acidic residues. K20 is covalently cross-linked (Glycyl lysine isopeptide (Lys-Gly) (interchain with G-Cter in SUMO2)). S29 carries the post-translational modification Phosphoserine. Residue K31 forms a Glycyl lysine isopeptide (Lys-Gly) (interchain with G-Cter in SUMO2) linkage. The segment at 43-68 (ISDSDGEEPKEENGLQKTKTKQSNRA) is disordered. Phosphoserine is present on residues S44 and S46. The short motif at 60 to 78 (TKTKQSNRAKCLAKRKIAQ) is the LR motif element. Glycyl lysine isopeptide (Lys-Gly) (interchain with G-Cter in SUMO2) cross-links involve residues K75 and K90. The UIM 1 domain occupies 80–99 (TEEEQFALALKMSEQEAREV). 2 disordered regions span residues 93–152 (EQEA…DSGL) and 164–205 (LFKG…DQSS). The tract at residues 97-103 (REVNSQE) is UIM-linker. Residues 100–200 (NSQEEEEEEL…EEPVSGSSGS (101 aa)) are necessary for interaction with NR6A1 N-terminus. S101 is modified (phosphoserine). The UIM 2 domain occupies 105 to 124 (EEEELLRKAIAESLNSCRPS). A compositionally biased stretch (polar residues) spans 117-130 (SLNSCRPSDASATR). S140 carries the phosphoserine modification. K188 participates in a covalent cross-link: Glycyl lysine isopeptide (Lys-Gly) (interchain with G-Cter in SUMO2). The span at 195-205 (SGSSGSWDQSS) shows a compositional bias: low complexity. The residue at position 205 (S205) is a Phosphoserine. A Glycyl lysine isopeptide (Lys-Gly) (interchain with G-Cter in SUMO2) cross-link involves residue K245. Residues 270–400 (TGGTVNYFWG…EEEPTTSHGQ (131 aa)) are AIR. Residues 320–378 (FGEPVLPRPPSLIQNECGQGEQASEKNECISEDMGDEDKEERQESRASDWHSKTKDFQE) form a disordered region. A compositionally biased stretch (acidic residues) spans 349–358 (ISEDMGDEDK). A compositionally biased stretch (basic and acidic residues) spans 359–378 (EERQESRASDWHSKTKDFQE). S379 carries the phosphoserine modification. Glycyl lysine isopeptide (Lys-Gly) (interchain with G-Cter in SUMO2) cross-links involve residues K382 and K387. Positions 391–422 (EEEPTTSHGQSSQGIVEETSEEGNSVPASQSV) are disordered. Residues 400–500 (QSSQGIVEET…EVAISTFSSS (101 aa)) are necessary for interaction with NR6A1 C-terminus. Phosphoserine occurs at positions 402 and 419. Residues 412-422 (EGNSVPASQSV) are compositionally biased toward polar residues. K428 participates in a covalent cross-link: Glycyl lysine isopeptide (Lys-Gly) (interchain with G-Cter in SUMO2). S466 is subject to Phosphoserine. The segment at 502–529 (QVSCPLCDQCFPPTKIERHAMYCNGLME) adopts a UBZ4-type zinc-finger fold. Residues C505, C508, H520, and C524 each coordinate Zn(2+). The zinc-finger-like region stretch occupies residues 505 to 582 (CPLCDQCFPP…REYQCHVDSC (78 aa)). Glycyl lysine isopeptide (Lys-Gly) (interchain with G-Cter in SUMO2) cross-links involve residues K544, K559, K562, K587, and K607. Residues 588–668 (ADQGDGPEGS…AGCSREMQSS (81 aa)) are disordered. Residues 614 to 623 (NPKEKGHSEG) are compositionally biased toward basic and acidic residues. At S627 the chain carries Phosphoserine. Residues 631-643 (QSEHKTSDADIKS) are compositionally biased toward basic and acidic residues. Residues K635 and K642 each participate in a glycyl lysine isopeptide (Lys-Gly) (interchain with G-Cter in SUMO2) cross-link. 2 positions are modified to phosphoserine: S653 and S677. Residues K696 and K697 each participate in a glycyl lysine isopeptide (Lys-Gly) (interchain with G-Cter in SUMO2) cross-link.

It belongs to the RAP80 family. As to quaternary structure, component of the ARISC complex, at least composed of UIMC1/RAP80, ABRAXAS1, BRCC3/BRCC36, BABAM2 and BABAM1/NBA1. Component of the BRCA1-A complex, at least composed of the BRCA1, BARD1, UIMC1/RAP80, ABRAXAS1, BRCC3/BRCC36, BABAM2 and BABAM1/NBA1. In the BRCA1-A complex, interacts directly with ABRAXAS1. Interacts with UBE2I. Interacts with NR6A1. Interacts with ESR1. Interacts with TSP57. Interacts with TRAIP. Post-translationally, sumoylated. Phosphorylated upon DNA damage by ATM or ATR. In terms of tissue distribution, expressed in testis, ovary, thymus and heart. Expressed in germ cells of the testis.

It is found in the nucleus. Functionally, ubiquitin-binding protein. Specifically recognizes and binds 'Lys-63'-linked ubiquitin. Plays a central role in the BRCA1-A complex by specifically binding 'Lys-63'-linked ubiquitinated histones H2A and H2AX at DNA lesions sites, leading to target the BRCA1-BARD1 heterodimer to sites of DNA damage at double-strand breaks (DSBs). The BRCA1-A complex also possesses deubiquitinase activity that specifically removes 'Lys-63'-linked ubiquitin on histones H2A and H2AX. Also weakly binds monoubiquitin but with much less affinity than 'Lys-63'-linked ubiquitin. May interact with monoubiquitinated histones H2A and H2B; the relevance of such results is however unclear in vivo. Does not bind Lys-48'-linked ubiquitin. May indirectly act as a transcriptional repressor by inhibiting the interaction of NR6A1 with the corepressor NCOR1. The protein is BRCA1-A complex subunit RAP80 (UIMC1) of Homo sapiens (Human).